A 143-amino-acid polypeptide reads, in one-letter code: uncharacterized protein (143 aa).

A helical transmembrane segment spans residues 4 to 24; sequence FGIVALSIICSIAFLFVAYGV. A disordered region spans residues 97 to 143; that stretch reads TVPFVNTEAPPPRLSSSFSRQSGENAETQSQVSASPFNDKNSPYVQE. Polar residues predominate over residues 110 to 143; that stretch reads LSSSFSRQSGENAETQSQVSASPFNDKNSPYVQE.

It localises to the golgi apparatus membrane. This is an uncharacterized protein from Schizosaccharomyces pombe (strain 972 / ATCC 24843) (Fission yeast).